Consider the following 578-residue polypeptide: NADPH oxidase 4 (578 aa).

Residues Met-1–His-16 are Cytoplasmic-facing. Residues Leu-17–Tyr-37 form a helical membrane-spanning segment. Over Asn-38 to Ser-62 the chain is Extracellular. A Ferric oxidoreductase domain is found at Arg-58–Ile-303. A helical membrane pass occupies residues Val-63–Leu-83. Over Arg-84–Thr-103 the chain is Cytoplasmic. A helical membrane pass occupies residues Phe-104–Leu-124. The Extracellular segment spans residues Val-125–Leu-154. The N-linked (GlcNAc...) asparagine glycan is linked to Asn-133. A helical membrane pass occupies residues Leu-155–Ile-175. Residues Thr-176 to Asp-188 are Cytoplasmic-facing. Residues Ile-189–Ser-209 traverse the membrane as a helical segment. The Extracellular portion of the chain corresponds to Gly-210–Glu-424. The tract at residues Asn-218–Glu-273 is E-loop; essential for H2O2 generating catalytic activity. N-linked (GlcNAc...) asparagine glycosylation occurs at Asn-230. A mediates interaction with TLR4 region spans residues His-248–Glu-575. The FAD-binding FR-type domain maps to Arg-304–Glu-419. The chain crosses the membrane as a helical span at residues Val-425 to Leu-445. The Cytoplasmic portion of the chain corresponds to Leu-446–Ser-578.

Interacts with protein disulfide isomerase. Interacts with, relocalizes and stabilizes CYBA/p22phox. Interacts with TLR4. Interacts with PPP1R15A. Interacts with LRRC8A; this interaction prevents the ubiquitin-mediated degradation of LRRC8A. The cofactor is heme. Post-translationally, deubiquitinated by USP19. N-glycosylated and glycosylation is required for its proper function. In terms of processing, N-glycosylated. Expressed by distal tubular cells in kidney cortex and in endothelial cells (at protein level). Widely expressed. Strongly expressed in kidney and to a lower extent in heart, adipocytes, hepatoma, endothelial cells, skeletal muscle, brain, several brain tumor cell lines and airway epithelial cells.

It is found in the cytoplasm. It localises to the endoplasmic reticulum membrane. The protein localises to the cell membrane. The protein resides in the cell junction. Its subcellular location is the focal adhesion. It is found in the nucleus. It localises to the nucleolus. The protein localises to the perinuclear region. It catalyses the reaction NADPH + 2 O2 = 2 superoxide + NADP(+) + H(+). It carries out the reaction NADPH + O2 + H(+) = H2O2 + NADP(+). Inhibited by plumbagin. Activated by phorbol 12-myristate 13-acetate (PMA). Activated by insulin. Inhibited by diphenylene iodonium. Its function is as follows. NADPH oxidase that catalyzes predominantly the reduction of oxygen to H2O2. Can also catalyze to a smaller extent, the reduction of oxygen to superoxide. May function as an oxygen sensor regulating the KCNK3/TASK-1 potassium channel and HIF1A activity. May regulate insulin signaling cascade. May play a role in apoptosis, bone resorption and lipolysaccharide-mediated activation of NFKB. May produce superoxide in the nucleus and play a role in regulating gene expression upon cell stimulation. Promotes ferroptosis, reactive oxygen species production and reduced glutathione (GSH) levels by activating NLRP3 inflammasome activation and cytokine release. In terms of biological role, NADPH oxidase that catalyzes the generation of superoxide from molecular oxygen utilizing NADPH as an electron donor. Involved in redox signaling in vascular cells. Modulates the nuclear activation of ERK1/2 and the ELK1 transcription factor, and is capable of inducing nuclear DNA damage. Functionally, lacks superoxide-generating NADPH oxidase activity. This Homo sapiens (Human) protein is NADPH oxidase 4 (NOX4).